The sequence spans 949 residues: Glycine dehydrogenase (decarboxylating) (949 aa).

K697 carries the post-translational modification N6-(pyridoxal phosphate)lysine.

This sequence belongs to the GcvP family. In terms of assembly, the glycine cleavage system is composed of four proteins: P, T, L and H. The cofactor is pyridoxal 5'-phosphate.

The enzyme catalyses N(6)-[(R)-lipoyl]-L-lysyl-[glycine-cleavage complex H protein] + glycine + H(+) = N(6)-[(R)-S(8)-aminomethyldihydrolipoyl]-L-lysyl-[glycine-cleavage complex H protein] + CO2. Its function is as follows. The glycine cleavage system catalyzes the degradation of glycine. The P protein binds the alpha-amino group of glycine through its pyridoxal phosphate cofactor; CO(2) is released and the remaining methylamine moiety is then transferred to the lipoamide cofactor of the H protein. The protein is Glycine dehydrogenase (decarboxylating) of Deinococcus radiodurans (strain ATCC 13939 / DSM 20539 / JCM 16871 / CCUG 27074 / LMG 4051 / NBRC 15346 / NCIMB 9279 / VKM B-1422 / R1).